Consider the following 87-residue polypeptide: Antitoxin YefM (87 aa).

The protein belongs to the phD/YefM antitoxin family. Forms a complex with YoeB which inhibits its toxin activity.

Functionally, antitoxin component of a type II toxin-antitoxin (TA) system. A probable antitoxin for the putative mRNA interferase YeoB. This chain is Antitoxin YefM, found in Streptomyces coelicolor (strain ATCC BAA-471 / A3(2) / M145).